The primary structure comprises 469 residues: Serine/threonine-protein kinase orb6 (469 aa).

The 300-residue stretch at 93-392 folds into the Protein kinase domain; the sequence is FSTIKVIGKG…AIEIMQHPFF (300 aa). ATP is bound by residues 99–107 and Lys122; that span reads IGKGAFGEV. Asp216 acts as the Proton acceptor in catalysis. The region spanning 393–467 is the AGC-kinase C-terminal domain; sequence TGIDWDHIRE…KKFNYLTMKG (75 aa).

This sequence belongs to the protein kinase superfamily. Ser/Thr protein kinase family. As to quaternary structure, interacts with mob2.

It catalyses the reaction L-seryl-[protein] + ATP = O-phospho-L-seryl-[protein] + ADP + H(+). It carries out the reaction L-threonyl-[protein] + ATP = O-phospho-L-threonyl-[protein] + ADP + H(+). Functionally, interacts with pak1/shk1 and coordinates cell morphogenesis with the cell cycle. It is essential for maintenance of cell polarity and is involved in mitotic control. This is Serine/threonine-protein kinase orb6 (orb6) from Schizosaccharomyces pombe (strain 972 / ATCC 24843) (Fission yeast).